We begin with the raw amino-acid sequence, 673 residues long: Acetoacetyl-CoA synthetase (673 aa).

This sequence belongs to the ATP-dependent AMP-binding enzyme family.

It localises to the cytoplasm. Its subcellular location is the cytosol. The enzyme catalyses acetoacetate + ATP + CoA = acetoacetyl-CoA + AMP + diphosphate. Converts acetoacetate to acetoacetyl-CoA in the cytosol. Ketone body-utilizing enzyme, responsible for the synthesis of cholesterol and fatty acids. The protein is Acetoacetyl-CoA synthetase (aacs) of Danio rerio (Zebrafish).